The following is a 342-amino-acid chain: Trans-3-hydroxy-L-proline dehydratase (342 aa).

The Proton acceptor role is filled by serine 90. Residues 91–92, aspartate 251, and 256–257 contribute to the substrate site; these read GS and GT.

It belongs to the proline racemase family.

The catalysed reaction is trans-3-hydroxy-L-proline = 1-pyrroline-2-carboxylate + H2O. Functionally, catalyzes the dehydration of trans-3-hydroxy-L-proline (t3LHyp) to Delta(1)-pyrroline-2-carboxylate (Pyr2C). Displays neither proline racemase activity nor 4-hydroxyproline 2-epimerase activity. This chain is Trans-3-hydroxy-L-proline dehydratase, found in Brucella suis biovar 1 (strain 1330).